Reading from the N-terminus, the 310-residue chain is Olfactory receptor 5T7 (310 aa).

The Extracellular portion of the chain corresponds to 1–23; it reads MENITEVTEFILMGFTDNADLEI. Asn-3 is a glycosylation site (N-linked (GlcNAc...) asparagine). Residues 24–44 traverse the membrane as a helical segment; the sequence is LSFFLFLAIYLFTLMGNLGLI. At 45–52 the chain is on the cytoplasmic side; sequence TLVIGDSR. The helical transmembrane segment at 53-73 threads the bilayer; sequence LHNPMYYFLSVLSSVDACYST. The Extracellular portion of the chain corresponds to 74 to 97; the sequence is VITPQMVVDFVSEKKVISFIGCAT. A disulfide bridge connects residues Cys-95 and Cys-187. A helical membrane pass occupies residues 98–118; that stretch reads QMFLAVTFGTTECFLLAAMAY. Residues 119–131 lie on the Cytoplasmic side of the membrane; it reads DRYVAIHNPLMYV. Residues 132–152 form a helical membrane-spanning segment; it reads VSMSPRVYVPLIIASYAGGIL. Residues 153–194 are Extracellular-facing; that stretch reads HAVIHTVATFRLSFCGSNKISHIFCDIPPLLAISCSDTHFNQ. A helical transmembrane segment spans residues 195-215; the sequence is LLLFYCAGFIEVVTILIVLLS. The Cytoplasmic segment spans residues 216-235; sequence YGFILSVILKTRSTEGKRKV. A helical transmembrane segment spans residues 236–256; sequence FSTCGSHLMAVSTFHGTVLFM. Residues 257–269 are Extracellular-facing; it reads YVRPSDSYALEHD. Residues 270 to 290 traverse the membrane as a helical segment; the sequence is MMVSIFYSIVIPMLNPLIYSL. The Cytoplasmic segment spans residues 291–310; the sequence is RNKDVKEAIKKVFGKRILCG.

This sequence belongs to the G-protein coupled receptor 1 family.

It is found in the cell membrane. Its function is as follows. Potential odorant receptor. The polypeptide is Olfactory receptor 5T7 (Mus musculus (Mouse)).